Here is an 813-residue protein sequence, read N- to C-terminus: LPS-assembly protein LptD (813 aa).

A signal peptide spans 1 to 22 (MRRALRLLPLPLSIAICLPAMA).

It belongs to the LptD family. Component of the lipopolysaccharide transport and assembly complex. Interacts with LptE and LptA.

The protein localises to the cell outer membrane. Its function is as follows. Together with LptE, is involved in the assembly of lipopolysaccharide (LPS) at the surface of the outer membrane. The chain is LPS-assembly protein LptD from Xanthomonas oryzae pv. oryzae (strain KACC10331 / KXO85).